We begin with the raw amino-acid sequence, 178 residues long: Putative pre-16S rRNA nuclease (178 aa).

Composition is skewed to basic and acidic residues over residues 1–18 (MDHA…DPGR) and 50–60 (PRSKDRGPDAP). Disordered regions lie at residues 1–23 (MDHA…RRIG) and 36–60 (SDPD…PDAP).

It belongs to the YqgF nuclease family.

Its subcellular location is the cytoplasm. Functionally, could be a nuclease involved in processing of the 5'-end of pre-16S rRNA. The polypeptide is Putative pre-16S rRNA nuclease (Rhodococcus opacus (strain B4)).